The primary structure comprises 492 residues: uncharacterized protein (492 aa).

This sequence belongs to the FGGY kinase family.

This is an uncharacterized protein from Escherichia coli (strain K12).